The sequence spans 116 residues: Iron-sulfur cluster assembly protein CyaY (116 aa).

The protein belongs to the frataxin family.

Functionally, involved in iron-sulfur (Fe-S) cluster assembly. May act as a regulator of Fe-S biogenesis. This chain is Iron-sulfur cluster assembly protein CyaY, found in Buchnera aphidicola subsp. Acyrthosiphon pisum (strain APS) (Acyrthosiphon pisum symbiotic bacterium).